The primary structure comprises 333 residues: Probable siderophore transport system permease protein YfiZ (333 aa).

A signal peptide spans 1–31; sequence MICKKASSKWIVLVCLIFILLTAVCASVVYG. Helical transmembrane passes span 64–84, 94–114, 119–139, 152–172, 193–213, 246–266, 280–300, and 303–323; these read ALVA…MQAL, IFGI…FLHI, ALVW…YAAG, TLAG…LLSV, LDLL…CFFL, VMLA…GIII, WVLP…DIGA, and IIMP…MPVF.

The protein belongs to the binding-protein-dependent transport system permease family. FecCD subfamily. In terms of assembly, the complex is composed of one ATP-binding protein (YusV), two transmembrane proteins (YfiZ and YfhA) and a solute-binding protein (YfiY).

The protein localises to the cell membrane. Its function is as follows. Part of the ABC transporter complex YfiYZ/YfhA/YusV involved in import of the iron-hydroxamate siderophores schizokinen, arthrobactin and corprogen. This Bacillus subtilis (strain 168) protein is Probable siderophore transport system permease protein YfiZ (yfiZ).